Reading from the N-terminus, the 252-residue chain is Chitooligosaccharide deacetylase (252 aa).

Positions 61 and 125 each coordinate Mg(2+).

The protein belongs to the YdjC deacetylase family. ChbG subfamily. Homodimer. It depends on Mg(2+) as a cofactor.

The protein resides in the cytoplasm. The enzyme catalyses N,N'-diacetylchitobiose + H2O = N-acetyl-beta-D-glucosaminyl-(1-&gt;4)-D-glucosamine + acetate. It carries out the reaction diacetylchitobiose-6'-phosphate + H2O = N'-monoacetylchitobiose-6'-phosphate + acetate. It functions in the pathway glycan degradation; chitin degradation. Involved in the degradation of chitin. ChbG is essential for growth on the acetylated chitooligosaccharides chitobiose and chitotriose but is dispensable for growth on cellobiose and chitosan dimer, the deacetylated form of chitobiose. Deacetylation of chitobiose-6-P and chitotriose-6-P is necessary for both the activation of the chb promoter by the regulatory protein ChbR and the hydrolysis of phosphorylated beta-glucosides by the phospho-beta-glucosidase ChbF. Catalyzes the removal of only one acetyl group from chitobiose-6-P to yield monoacetylchitobiose-6-P, the inducer of ChbR and the substrate of ChbF. The chain is Chitooligosaccharide deacetylase from Klebsiella pneumoniae subsp. pneumoniae (strain ATCC 700721 / MGH 78578).